A 711-amino-acid polypeptide reads, in one-letter code: MINPIVKTIELPDGRTITLETGKLAKQADGSVMLRMGNTMLLATVCAAKDAVPGTDFMPLQVEYKEKYSAFGRFPGGFTKREGKASDYEILTCRLVDRALRPLFPDNFHAEVYVNIVLFSADGIDMPDALAGLAASAALAVSDIPFGGPISEVRVARIDGQFVINPTFEQLEKADMDLMVAATYDNIMMVEGEMQEVSEQDLLAAMKAAHEAIKVHCKAQMELMEEVGSTVKREYCHEENDEDLRKAVREACYDKAYAIAASGNRNKHERQDAFDAIRDEFKTQYTEEELEEKGALIDRYYHDVEKEAMRRCILDEGKRLDGRKTTEIRPIWCEVGYLPGPHGSAIFTRGETQSLTSVTLGTKLDEKIVDDVLDQHRERFLLHYNFPPYSTGEAKAQRGVGRREIGHGHLAWRALKGQIPAGYPYTVRVVSDIMESNGSSSMATVCAGTLALMDAGVAMKKPVSGIAMGLIKNAGEEKYAVLSDILGDEDHLGDMDFKVTGTRDGITATQMDIKVDGLSFEILEKALLQAKEGREHILNKLTECIAEPRKDLKPHAPRIETMTIPKEFIGAIIGPGGKIIQGMQEETGATITIEETDGVGRIEIAGTNKKCIDDAMRIIKGIVAVPEVGEVYVGKVRSVMPYGVFVEFLPGKDGLLHISEIDWKRLETIEEAGLKEGDEIEVKLLDIDPKTGKFKLSHKVLLPRPEKQEKK.

Positions 490 and 496 each coordinate Mg(2+). The 63-residue stretch at 557-619 (PRIETMTIPK…KCIDDAMRII (63 aa)) folds into the KH domain. Positions 629–699 (GEVYVGKVRS…KTGKFKLSHK (71 aa)) constitute an S1 motif domain.

The protein belongs to the polyribonucleotide nucleotidyltransferase family. Mg(2+) serves as cofactor.

It is found in the cytoplasm. It catalyses the reaction RNA(n+1) + phosphate = RNA(n) + a ribonucleoside 5'-diphosphate. Functionally, involved in mRNA degradation. Catalyzes the phosphorolysis of single-stranded polyribonucleotides processively in the 3'- to 5'-direction. The polypeptide is Polyribonucleotide nucleotidyltransferase (Phocaeicola vulgatus (strain ATCC 8482 / DSM 1447 / JCM 5826 / CCUG 4940 / NBRC 14291 / NCTC 11154) (Bacteroides vulgatus)).